Consider the following 104-residue polypeptide: Large ribosomal subunit protein uL23 (104 aa).

This sequence belongs to the universal ribosomal protein uL23 family. In terms of assembly, part of the 50S ribosomal subunit. Contacts protein L29, and trigger factor when it is bound to the ribosome.

One of the early assembly proteins it binds 23S rRNA. One of the proteins that surrounds the polypeptide exit tunnel on the outside of the ribosome. Forms the main docking site for trigger factor binding to the ribosome. The protein is Large ribosomal subunit protein uL23 of Ralstonia nicotianae (strain ATCC BAA-1114 / GMI1000) (Ralstonia solanacearum).